The sequence spans 67 residues: Major cold shock protein (67 aa).

A CSD domain is found at 4–64; the sequence is GTVKWFNAEK…GPKGLQAANV (61 aa).

It is found in the cytoplasm. This Micrococcus luteus (strain ATCC 4698 / DSM 20030 / JCM 1464 / CCM 169 / CCUG 5858 / IAM 1056 / NBRC 3333 / NCIMB 9278 / NCTC 2665 / VKM Ac-2230) (Micrococcus lysodeikticus) protein is Major cold shock protein (cspA).